The following is a 403-amino-acid chain: 26S proteasome regulatory subunit 8 (403 aa).

186-193 (GPPGTGKT) is a binding site for ATP.

It belongs to the AAA ATPase family.

The protein localises to the cytoplasm. Its subcellular location is the nucleus. Functionally, the 26S proteasome is involved in the ATP-dependent degradation of ubiquitinated proteins. The regulatory (or ATPase) complex confers ATP dependency and substrate specificity to the 26S complex. This chain is 26S proteasome regulatory subunit 8 (psmC5), found in Dictyostelium discoideum (Social amoeba).